The primary structure comprises 348 residues: Probable dual-specificity RNA methyltransferase RlmN (348 aa).

E90 functions as the Proton acceptor in the catalytic mechanism. The 229-residue stretch at 96–324 folds into the Radical SAM core domain; the sequence is AAERLTVCVS…ASVRHTRGLE (229 aa). C103 and C329 are oxidised to a cystine. C110, C114, and C117 together coordinate [4Fe-4S] cluster. Residues 157–158, S187, 210–212, and N286 contribute to the S-adenosyl-L-methionine site; these read GE and SLH. The active-site S-methylcysteine intermediate is the C329.

It belongs to the radical SAM superfamily. RlmN family. [4Fe-4S] cluster serves as cofactor.

Its subcellular location is the cytoplasm. It catalyses the reaction adenosine(2503) in 23S rRNA + 2 reduced [2Fe-2S]-[ferredoxin] + 2 S-adenosyl-L-methionine = 2-methyladenosine(2503) in 23S rRNA + 5'-deoxyadenosine + L-methionine + 2 oxidized [2Fe-2S]-[ferredoxin] + S-adenosyl-L-homocysteine. The catalysed reaction is adenosine(37) in tRNA + 2 reduced [2Fe-2S]-[ferredoxin] + 2 S-adenosyl-L-methionine = 2-methyladenosine(37) in tRNA + 5'-deoxyadenosine + L-methionine + 2 oxidized [2Fe-2S]-[ferredoxin] + S-adenosyl-L-homocysteine. Specifically methylates position 2 of adenine 2503 in 23S rRNA and position 2 of adenine 37 in tRNAs. This Gloeobacter violaceus (strain ATCC 29082 / PCC 7421) protein is Probable dual-specificity RNA methyltransferase RlmN.